Reading from the N-terminus, the 403-residue chain is tRNA(Met) cytidine acetate ligase (403 aa).

Residues 7–20 (VVEYNPFHNGHAYH), glycine 101, asparagine 164, and 189–190 (RI) each bind ATP.

This sequence belongs to the TmcAL family.

It is found in the cytoplasm. The enzyme catalyses cytidine(34) in elongator tRNA(Met) + acetate + ATP = N(4)-acetylcytidine(34) in elongator tRNA(Met) + AMP + diphosphate. Functionally, catalyzes the formation of N(4)-acetylcytidine (ac(4)C) at the wobble position of elongator tRNA(Met), using acetate and ATP as substrates. First activates an acetate ion to form acetyladenylate (Ac-AMP) and then transfers the acetyl group to tRNA to form ac(4)C34. The protein is tRNA(Met) cytidine acetate ligase of Lysinibacillus sphaericus (strain C3-41).